A 136-amino-acid polypeptide reads, in one-letter code: Large-conductance mechanosensitive channel (136 aa).

Over M1–V16 the chain is Cytoplasmic. A helical membrane pass occupies residues V17 to I45. At G46–A73 the chain is on the extracellular side. A helical membrane pass occupies residues Y74–M93. Topologically, residues G94–S136 are cytoplasmic.

This sequence belongs to the MscL family. In terms of assembly, homopentamer.

Its subcellular location is the cell inner membrane. Functionally, channel that opens in response to stretch forces in the membrane lipid bilayer. Forms a nonselective ion channel with a conductance of about 4 nanosiemens. May participate in the regulation of osmotic pressure changes within the cell. The sequence is that of Large-conductance mechanosensitive channel from Pseudomonas fluorescens.